A 213-amino-acid chain; its full sequence is Leucyl/phenylalanyl-tRNA--protein transferase (213 aa).

It belongs to the L/F-transferase family.

It localises to the cytoplasm. The catalysed reaction is N-terminal L-lysyl-[protein] + L-leucyl-tRNA(Leu) = N-terminal L-leucyl-L-lysyl-[protein] + tRNA(Leu) + H(+). It catalyses the reaction N-terminal L-arginyl-[protein] + L-leucyl-tRNA(Leu) = N-terminal L-leucyl-L-arginyl-[protein] + tRNA(Leu) + H(+). The enzyme catalyses L-phenylalanyl-tRNA(Phe) + an N-terminal L-alpha-aminoacyl-[protein] = an N-terminal L-phenylalanyl-L-alpha-aminoacyl-[protein] + tRNA(Phe). In terms of biological role, functions in the N-end rule pathway of protein degradation where it conjugates Leu, Phe and, less efficiently, Met from aminoacyl-tRNAs to the N-termini of proteins containing an N-terminal arginine or lysine. This Campylobacter lari (strain RM2100 / D67 / ATCC BAA-1060) protein is Leucyl/phenylalanyl-tRNA--protein transferase.